A 480-amino-acid polypeptide reads, in one-letter code: MRHDALFERVSARLKAQVGPDVFASWFGRLKLHSVSKSVVRLSVPTTFLKSWINNRYLDLITTLVQQEDSEILKVEILVRTATRGHRPTAPEESVAAAAEAAVVPPSRRSAAPTVAIAAAAVAAAPARPVQAPLFGSPLDQRYGFDSFVEGSSNRVALAAARTIAEAGAGAVRFNPLFIHSSVGLGKTHLLQAIALAALQSARAPRVVYLTAEYFMWRFATAIRDNDALSLKESLRNIDLLIIDDMQFLQGKSIQHEFCHLLNMLLDSAKQVVVAADRAPWELESLDSRVRSRLQGGVAIEMEGPDYEMRLEMLKRRLEAARQDDASLEIPLEILSHVARNVTASGRELEGAFNQLLFRRSFEPQLSIERVDELLGHLVNAGEPRRVRIEDIQRVVAKHYNVSRQELVSNRRTRVIVKPRQIAMYLSKTLTPRSFPEIGRRFGGRDHTTVLHAVRKIEELISADTKLSHEIELLKRLINE.

The segment at 1-71 (MRHDALFERV…TTLVQQEDSE (71 aa)) is domain I, interacts with DnaA modulators. Positions 71 to 137 (EILKVEILVR…RPVQAPLFGS (67 aa)) are domain II. A domain III, AAA+ region region spans residues 138 to 360 (PLDQRYGFDS…GAFNQLLFRR (223 aa)). Residues Gly184, Gly186, Lys187, and Thr188 each coordinate ATP. Positions 361–480 (SFEPQLSIER…IELLKRLINE (120 aa)) are domain IV, binds dsDNA.

This sequence belongs to the DnaA family. In terms of assembly, oligomerizes as a right-handed, spiral filament on DNA at oriC.

It is found in the cytoplasm. Functionally, plays an essential role in the initiation and regulation of chromosomal replication. ATP-DnaA binds to the origin of replication (oriC) to initiate formation of the DNA replication initiation complex once per cell cycle. Binds the DnaA box (a 9 base pair repeat at the origin) and separates the double-stranded (ds)DNA. Forms a right-handed helical filament on oriC DNA; dsDNA binds to the exterior of the filament while single-stranded (ss)DNA is stabiized in the filament's interior. The ATP-DnaA-oriC complex binds and stabilizes one strand of the AT-rich DNA unwinding element (DUE), permitting loading of DNA polymerase. After initiation quickly degrades to an ADP-DnaA complex that is not apt for DNA replication. Binds acidic phospholipids. This Rhizobium meliloti (strain 1021) (Ensifer meliloti) protein is Chromosomal replication initiator protein DnaA.